The following is a 357-amino-acid chain: 3-isopropylmalate dehydrogenase (357 aa).

NAD(+) is bound at residue 76–89; the sequence is GPQWDTIDPALRPE. Positions 96, 106, 134, and 224 each coordinate substrate. Residues D224, D248, and D252 each contribute to the Mg(2+) site. Position 282-294 (282-294) interacts with NAD(+); that stretch reads GSAPDIAGQGIAN.

Belongs to the isocitrate and isopropylmalate dehydrogenases family. LeuB type 1 subfamily. Homodimer. Requires Mg(2+) as cofactor. Mn(2+) is required as a cofactor.

It localises to the cytoplasm. The catalysed reaction is (2R,3S)-3-isopropylmalate + NAD(+) = 4-methyl-2-oxopentanoate + CO2 + NADH. Its pathway is amino-acid biosynthesis; L-leucine biosynthesis; L-leucine from 3-methyl-2-oxobutanoate: step 3/4. Catalyzes the oxidation of 3-carboxy-2-hydroxy-4-methylpentanoate (3-isopropylmalate) to 3-carboxy-4-methyl-2-oxopentanoate. The product decarboxylates to 4-methyl-2 oxopentanoate. The polypeptide is 3-isopropylmalate dehydrogenase (Xanthomonas campestris pv. campestris (strain 8004)).